The chain runs to 379 residues: MSELSFDAPVWHHGKALRKGYTTGSCATAAAKVAALMVLRQHLIHQVSIVTPSGVTLCLNVESPHIEGQQAIAAIRKDGGDDVDATHGMLIFARVTLNDSGEITLTGGEGIGTVTRKGIGLPLGSAAINRTPRHTIESAVREAIGPARGADVEIFAPEGEARAQKTYNSRLGILGGISIIGTTGIVTPMSEESWKRSLSLELEIKRASGLTRVILVPGNHGERFVREQMGVDTQAVVTMSNFVGYMIEEAVRLGFCQIVLVGHPGKLIKIAAGIFHTHSHIADARMETLVAHLALLGAPLELLTLVSDCDTTEAAMEHIEAYGFGHIYNHLARRICLRVMQMLRFTKTPPVCDAILFSFDNHILGSNRPVDEIAKELQC.

Belongs to the CbiD family.

It carries out the reaction Co-precorrin-5B + S-adenosyl-L-methionine = Co-precorrin-6A + S-adenosyl-L-homocysteine. It participates in cofactor biosynthesis; adenosylcobalamin biosynthesis; cob(II)yrinate a,c-diamide from sirohydrochlorin (anaerobic route): step 6/10. In terms of biological role, catalyzes the methylation of C-1 in cobalt-precorrin-5B to form cobalt-precorrin-6A. This Salmonella typhimurium (strain LT2 / SGSC1412 / ATCC 700720) protein is Cobalt-precorrin-5B C(1)-methyltransferase.